A 136-amino-acid chain; its full sequence is MLFSLRELVQWLGFATFEIFVHLLALLVFSVLLALRVDGLVPGLSWWNVFVPFFAADGLSTYFTTIVSVRLFQDGEKRLAVLRLFWVLTVLSLKFVFEMLLCQKLAEQTRELWFGLITSPLFILLQLLMIRACRVN.

The segment at 1–51 (MLFSLRELVQWLGFATFEIFVHLLALLVFSVLLALRVDGLVPGLSWWNVFV) is interaction with STING1. Transmembrane regions (helical) follow at residues 14-34 (FATF…VLLA), 50-72 (FVPF…VRLF), 81-101 (VLRL…EMLL), and 112-132 (LWFG…MIRA). The interval 52-136 (PFFAADGLST…LLMIRACRVN (85 aa)) is required for the lysosomal localization of the STING-TMEM203 complex.

In terms of assembly, homodimer. Interacts with ATP2A2, ITPR3 and STIM1. Interacts with STING1 (via transmembrane domain). Increased expression seen in T-lymphocytes from patients with systemic lupus erythematosus (SLE).

It localises to the endoplasmic reticulum membrane. The protein localises to the endoplasmic reticulum-Golgi intermediate compartment. Its subcellular location is the lysosome membrane. Involved in the regulation of cellular calcium homeotasis. Required for spermatogenesis. Acts as a regulator of STING-mediated inflammatory signaling in macrophages. Forms a complex with STING, promoting the activity of TBK1 kinase and the transcription factor IRF3, leading to activation of type I interferon expression. In Homo sapiens (Human), this protein is Transmembrane protein 203 (TMEM203).